Consider the following 116-residue polypeptide: Signal recognition particle 14 kDa protein (116 aa).

This sequence belongs to the SRP14 family. As to quaternary structure, heterodimer with ZK512.4/SRP9; binds RNA as heterodimer. Component of a signal recognition particle (SRP) complex that consists of a 7SL RNA molecule of 300 nucleotides and six protein subunits: srpa-72, srpa-68, SRP54, F37F2.2/SRP19, F25G6.8/SRP14 and ZK512.4/SRP9.

The protein resides in the cytoplasm. In terms of biological role, component of the signal recognition particle (SRP) complex, a ribonucleoprotein complex that mediates the cotranslational targeting of secretory and membrane proteins to the endoplasmic reticulum (ER). F37F2.2/srpa-19 together with F25G6.8/srpa-14 and the Alu portion of the SRP RNA, constitutes the elongation arrest domain of SRP. The complex of F37F2.2/srpa-19 and F25G6.8/srpa-14 is required for SRP RNA binding. This Caenorhabditis elegans protein is Signal recognition particle 14 kDa protein.